Here is a 534-residue protein sequence, read N- to C-terminus: Cysteine/serine-rich nuclear protein 2 (534 aa).

M1 is subject to N-acetylmethionine. 2 disordered regions span residues M1 to T52 and D480 to V534. The segment covering S31–S40 has biased composition (low complexity). Over residues N42–T52 the composition is skewed to polar residues. Positions D480–H492 are enriched in basic and acidic residues.

This sequence belongs to the AXUD1 family. In terms of tissue distribution, highest expression detected in thymus, brain and ovary. Low levels detected in naive T-cells.

It is found in the nucleus. Binds to the consensus sequence 5'-AGAGTG-3' and has transcriptional activator activity. May play a role in apoptosis. This chain is Cysteine/serine-rich nuclear protein 2 (Csrnp2), found in Mus musculus (Mouse).